A 176-amino-acid polypeptide reads, in one-letter code: Dual-action ribosomal maturation protein DarP (176 aa).

This sequence belongs to the DarP family.

It is found in the cytoplasm. Its function is as follows. Member of a network of 50S ribosomal subunit biogenesis factors which assembles along the 30S-50S interface, preventing incorrect 23S rRNA structures from forming. Promotes peptidyl transferase center (PTC) maturation. This chain is Dual-action ribosomal maturation protein DarP, found in Actinobacillus pleuropneumoniae serotype 5b (strain L20).